A 503-amino-acid chain; its full sequence is Probable cytosol aminopeptidase (503 aa).

Mn(2+)-binding residues include lysine 270 and aspartate 275. Residue lysine 282 is part of the active site. Aspartate 293, aspartate 352, and glutamate 354 together coordinate Mn(2+). Arginine 356 is an active-site residue.

The protein belongs to the peptidase M17 family. It depends on Mn(2+) as a cofactor.

The protein resides in the cytoplasm. It carries out the reaction Release of an N-terminal amino acid, Xaa-|-Yaa-, in which Xaa is preferably Leu, but may be other amino acids including Pro although not Arg or Lys, and Yaa may be Pro. Amino acid amides and methyl esters are also readily hydrolyzed, but rates on arylamides are exceedingly low.. The enzyme catalyses Release of an N-terminal amino acid, preferentially leucine, but not glutamic or aspartic acids.. Its function is as follows. Presumably involved in the processing and regular turnover of intracellular proteins. Catalyzes the removal of unsubstituted N-terminal amino acids from various peptides. The chain is Probable cytosol aminopeptidase from Shigella boydii serotype 4 (strain Sb227).